Reading from the N-terminus, the 76-residue chain is UPF0346 protein LBUL_1194 (76 aa).

It belongs to the UPF0346 family.

This Lactobacillus delbrueckii subsp. bulgaricus (strain ATCC BAA-365 / Lb-18) protein is UPF0346 protein LBUL_1194.